The primary structure comprises 345 residues: Holliday junction branch migration complex subunit RuvB (345 aa).

The large ATPase domain (RuvB-L) stretch occupies residues 1–183; sequence MTTQRLVSAA…FGIVHRLEFY (183 aa). ATP contacts are provided by residues Ile22, Arg23, Gly64, Lys67, Thr68, Thr69, 130–132, Arg173, Tyr183, and Arg220; that span reads EDY. Residue Thr68 participates in Mg(2+) binding. Residues 184–254 form a small ATPAse domain (RuvB-S) region; the sequence is SVEELSRIVA…VAGKALEMLD (71 aa). The segment at 257–345 is head domain (RuvB-H); that stretch reads PNGFDQSDRR…NVNEELFGDE (89 aa). Arg293, Arg312, and Arg317 together coordinate DNA.

The protein belongs to the RuvB family. In terms of assembly, homohexamer. Forms an RuvA(8)-RuvB(12)-Holliday junction (HJ) complex. HJ DNA is sandwiched between 2 RuvA tetramers; dsDNA enters through RuvA and exits via RuvB. An RuvB hexamer assembles on each DNA strand where it exits the tetramer. Each RuvB hexamer is contacted by two RuvA subunits (via domain III) on 2 adjacent RuvB subunits; this complex drives branch migration. In the full resolvosome a probable DNA-RuvA(4)-RuvB(12)-RuvC(2) complex forms which resolves the HJ.

It localises to the cytoplasm. The enzyme catalyses ATP + H2O = ADP + phosphate + H(+). In terms of biological role, the RuvA-RuvB-RuvC complex processes Holliday junction (HJ) DNA during genetic recombination and DNA repair, while the RuvA-RuvB complex plays an important role in the rescue of blocked DNA replication forks via replication fork reversal (RFR). RuvA specifically binds to HJ cruciform DNA, conferring on it an open structure. The RuvB hexamer acts as an ATP-dependent pump, pulling dsDNA into and through the RuvAB complex. RuvB forms 2 homohexamers on either side of HJ DNA bound by 1 or 2 RuvA tetramers; 4 subunits per hexamer contact DNA at a time. Coordinated motions by a converter formed by DNA-disengaged RuvB subunits stimulates ATP hydrolysis and nucleotide exchange. Immobilization of the converter enables RuvB to convert the ATP-contained energy into a lever motion, pulling 2 nucleotides of DNA out of the RuvA tetramer per ATP hydrolyzed, thus driving DNA branch migration. The RuvB motors rotate together with the DNA substrate, which together with the progressing nucleotide cycle form the mechanistic basis for DNA recombination by continuous HJ branch migration. Branch migration allows RuvC to scan DNA until it finds its consensus sequence, where it cleaves and resolves cruciform DNA. The chain is Holliday junction branch migration complex subunit RuvB from Methylococcus capsulatus (strain ATCC 33009 / NCIMB 11132 / Bath).